The following is a 427-amino-acid chain: Enolase (427 aa).

Gln-163 provides a ligand contact to (2R)-2-phosphoglycerate. Glu-205 (proton donor) is an active-site residue. Mg(2+) contacts are provided by Asp-242, Glu-285, and Asp-312. The (2R)-2-phosphoglycerate site is built by Lys-337, Arg-366, Ser-367, and Lys-388. Lys-337 functions as the Proton acceptor in the catalytic mechanism.

The protein belongs to the enolase family. Mg(2+) is required as a cofactor.

It localises to the cytoplasm. The protein resides in the secreted. The protein localises to the cell surface. It carries out the reaction (2R)-2-phosphoglycerate = phosphoenolpyruvate + H2O. It functions in the pathway carbohydrate degradation; glycolysis; pyruvate from D-glyceraldehyde 3-phosphate: step 4/5. Its function is as follows. Catalyzes the reversible conversion of 2-phosphoglycerate (2-PG) into phosphoenolpyruvate (PEP). It is essential for the degradation of carbohydrates via glycolysis. The protein is Enolase of Rhodopseudomonas palustris (strain BisB5).